Reading from the N-terminus, the 123-residue chain is Small ribosomal subunit protein uS12 (123 aa).

The disordered stretch occupies residues 1–31 (MPTIQQLVRKGRHSKKAKVATAGLKGSPQRR). Basic residues predominate over residues 9–18 (RKGRHSKKAK). Aspartate 89 is subject to 3-methylthioaspartic acid.

This sequence belongs to the universal ribosomal protein uS12 family. In terms of assembly, part of the 30S ribosomal subunit. Contacts proteins S8 and S17. May interact with IF1 in the 30S initiation complex.

In terms of biological role, with S4 and S5 plays an important role in translational accuracy. Interacts with and stabilizes bases of the 16S rRNA that are involved in tRNA selection in the A site and with the mRNA backbone. Located at the interface of the 30S and 50S subunits, it traverses the body of the 30S subunit contacting proteins on the other side and probably holding the rRNA structure together. The combined cluster of proteins S8, S12 and S17 appears to hold together the shoulder and platform of the 30S subunit. The protein is Small ribosomal subunit protein uS12 of Corynebacterium aurimucosum (strain ATCC 700975 / DSM 44827 / CIP 107346 / CN-1) (Corynebacterium nigricans).